A 90-amino-acid chain; its full sequence is Probable Fe(2+)-trafficking protein (90 aa).

The protein belongs to the Fe(2+)-trafficking protein family.

Could be a mediator in iron transactions between iron acquisition and iron-requiring processes, such as synthesis and/or repair of Fe-S clusters in biosynthetic enzymes. The chain is Probable Fe(2+)-trafficking protein from Dechloromonas aromatica (strain RCB).